A 616-amino-acid polypeptide reads, in one-letter code: Dihydroxy-acid dehydratase (616 aa).

Asp-81 contacts Mg(2+). Cys-122 provides a ligand contact to [2Fe-2S] cluster. 2 residues coordinate Mg(2+): Asp-123 and Lys-124. Lys-124 carries the post-translational modification N6-carboxylysine. Cys-195 provides a ligand contact to [2Fe-2S] cluster. Glu-491 serves as a coordination point for Mg(2+). Catalysis depends on Ser-517, which acts as the Proton acceptor.

This sequence belongs to the IlvD/Edd family. In terms of assembly, homodimer. The cofactor is [2Fe-2S] cluster. Requires Mg(2+) as cofactor.

It carries out the reaction (2R)-2,3-dihydroxy-3-methylbutanoate = 3-methyl-2-oxobutanoate + H2O. The catalysed reaction is (2R,3R)-2,3-dihydroxy-3-methylpentanoate = (S)-3-methyl-2-oxopentanoate + H2O. Its pathway is amino-acid biosynthesis; L-isoleucine biosynthesis; L-isoleucine from 2-oxobutanoate: step 3/4. The protein operates within amino-acid biosynthesis; L-valine biosynthesis; L-valine from pyruvate: step 3/4. In terms of biological role, functions in the biosynthesis of branched-chain amino acids. Catalyzes the dehydration of (2R,3R)-2,3-dihydroxy-3-methylpentanoate (2,3-dihydroxy-3-methylvalerate) into 2-oxo-3-methylpentanoate (2-oxo-3-methylvalerate) and of (2R)-2,3-dihydroxy-3-methylbutanoate (2,3-dihydroxyisovalerate) into 2-oxo-3-methylbutanoate (2-oxoisovalerate), the penultimate precursor to L-isoleucine and L-valine, respectively. This Sodalis glossinidius (strain morsitans) protein is Dihydroxy-acid dehydratase.